The chain runs to 92 residues: DNA-directed RNA polymerase subunit omega (92 aa).

It belongs to the RNA polymerase subunit omega family. The RNAP catalytic core consists of 2 alpha, 1 beta, 1 beta' and 1 omega subunit. When a sigma factor is associated with the core the holoenzyme is formed, which can initiate transcription.

It catalyses the reaction RNA(n) + a ribonucleoside 5'-triphosphate = RNA(n+1) + diphosphate. Functionally, promotes RNA polymerase assembly. Latches the N- and C-terminal regions of the beta' subunit thereby facilitating its interaction with the beta and alpha subunits. This is DNA-directed RNA polymerase subunit omega from Shewanella frigidimarina (strain NCIMB 400).